The sequence spans 375 residues: Probable peptidoglycan glycosyltransferase FtsW (375 aa).

Residues 1–16 (MNLNFKLNLKEIERYD) are Cytoplasmic-facing. Residues 17–37 (LVILLMAVALTCFGVVMVYSA) traverse the membrane as a helical segment. The Periplasmic portion of the chain corresponds to 38-49 (SSVMATKKFHDG). The helical transmembrane segment at 50–70 (FYFLKRQGIYAILGCAAMIVA) threads the bilayer. Residues 71-81 (MRIDYRQWREY) are Cytoplasmic-facing. Residues 82–102 (AVPILLGCLLLLLLVFIPGIG) form a helical membrane-spanning segment. Residues 103 to 145 (GAAKGASRWIRFPGFNLQPSELAKIALIMYMAYSLDKKQEKVK) are Periplasmic-facing. Residues 146–166 (FFSTGFAPYMVLLAILLAILL) traverse the membrane as a helical segment. The Cytoplasmic segment spans residues 167 to 169 (KQH). The chain crosses the membrane as a helical span at residues 170 to 190 (DLGSALTMGGVAILMLFAAGT). The Periplasmic segment spans residues 191-193 (RPR). Residues 194 to 214 (YILGMVVLTLPFLYFLVMNVD) traverse the membrane as a helical segment. At 215–233 (YRRRRILAYLNPWEDPTNT) the chain is on the cytoplasmic side. Residues 234–254 (GFQIIQSWLAFGNGGIIGQGL) traverse the membrane as a helical segment. The Periplasmic portion of the chain corresponds to 255-279 (GEGKQKMFFLPEAHTDFILSVVGEE). A helical transmembrane segment spans residues 280-300 (LGLIGVIVIAAMFLMLVLRGV). Over 301–312 (RVALMAQDPFGR) the chain is Cytoplasmic. Residues 313-333 (FLAFGIVTLLGIQAFVNMGVV) traverse the membrane as a helical segment. The Periplasmic portion of the chain corresponds to 334 to 343 (TGLLPTKGLA). The chain crosses the membrane as a helical span at residues 344 to 364 (LPFISYGGSSLIVTLFAVGIL). Residues 365–375 (LNVSTRMKGTP) are Cytoplasmic-facing.

It belongs to the SEDS family. FtsW subfamily.

The protein resides in the cell inner membrane. It carries out the reaction [GlcNAc-(1-&gt;4)-Mur2Ac(oyl-L-Ala-gamma-D-Glu-L-Lys-D-Ala-D-Ala)](n)-di-trans,octa-cis-undecaprenyl diphosphate + beta-D-GlcNAc-(1-&gt;4)-Mur2Ac(oyl-L-Ala-gamma-D-Glu-L-Lys-D-Ala-D-Ala)-di-trans,octa-cis-undecaprenyl diphosphate = [GlcNAc-(1-&gt;4)-Mur2Ac(oyl-L-Ala-gamma-D-Glu-L-Lys-D-Ala-D-Ala)](n+1)-di-trans,octa-cis-undecaprenyl diphosphate + di-trans,octa-cis-undecaprenyl diphosphate + H(+). The protein operates within cell wall biogenesis; peptidoglycan biosynthesis. Its function is as follows. Peptidoglycan polymerase that is essential for cell division. The polypeptide is Probable peptidoglycan glycosyltransferase FtsW (Geobacter metallireducens (strain ATCC 53774 / DSM 7210 / GS-15)).